A 605-amino-acid chain; its full sequence is Aspartate--tRNA(Asp/Asn) ligase (605 aa).

Glutamate 178 is an L-aspartate binding site. The interval 202–205 (QLFK) is aspartate. Position 224 (arginine 224) interacts with L-aspartate. ATP-binding positions include 224–226 (RDE) and glutamine 233. Histidine 458 provides a ligand contact to L-aspartate. An ATP-binding site is contributed by glutamate 488. Arginine 495 provides a ligand contact to L-aspartate. 540-543 (GLDR) serves as a coordination point for ATP. The interval 580–605 (QQLKELHVTPAKPAKTTAKTKPRPAD) is disordered.

Belongs to the class-II aminoacyl-tRNA synthetase family. Type 1 subfamily. Homodimer.

It localises to the cytoplasm. The catalysed reaction is tRNA(Asx) + L-aspartate + ATP = L-aspartyl-tRNA(Asx) + AMP + diphosphate. Aspartyl-tRNA synthetase with relaxed tRNA specificity since it is able to aspartylate not only its cognate tRNA(Asp) but also tRNA(Asn). Reaction proceeds in two steps: L-aspartate is first activated by ATP to form Asp-AMP and then transferred to the acceptor end of tRNA(Asp/Asn). This chain is Aspartate--tRNA(Asp/Asn) ligase, found in Thermosynechococcus vestitus (strain NIES-2133 / IAM M-273 / BP-1).